The chain runs to 116 residues: Cysteine-rich venom protein Cau1 (116 aa).

The region spanning 4–42 is the SCP domain; it reads SYAVVGHYTQIVWYKSDRIGCAAAYCPSSVYNYFYVCQY. Disulfide bonds link Cys-24–Cys-40, Cys-62–Cys-69, Cys-65–Cys-74, Cys-87–Cys-105, and Cys-96–Cys-109. The ShKT domain occupies 78 to 111; it reads CRVEDEFINCKDMAESRDCQDNYMMTNCAAFCSC.

It belongs to the CRISP family. Expressed by the venom gland.

It localises to the secreted. In terms of biological role, blocks contraction of smooth muscle elicited by high potassium-induced depolarization, but does not block caffeine-stimulated contraction. May target voltage-gated calcium channels on smooth muscle. In Causus rhombeatus (Rhombic night adder), this protein is Cysteine-rich venom protein Cau1.